Consider the following 321-residue polypeptide: Lipoyl synthase (321 aa).

[4Fe-4S] cluster contacts are provided by cysteine 68, cysteine 73, cysteine 79, cysteine 94, cysteine 98, cysteine 101, and serine 308. The Radical SAM core domain maps to 80 to 297 (FNHGTATFMI…KAEALAMGFT (218 aa)).

This sequence belongs to the radical SAM superfamily. Lipoyl synthase family. Requires [4Fe-4S] cluster as cofactor.

The protein localises to the cytoplasm. The enzyme catalyses [[Fe-S] cluster scaffold protein carrying a second [4Fe-4S](2+) cluster] + N(6)-octanoyl-L-lysyl-[protein] + 2 oxidized [2Fe-2S]-[ferredoxin] + 2 S-adenosyl-L-methionine + 4 H(+) = [[Fe-S] cluster scaffold protein] + N(6)-[(R)-dihydrolipoyl]-L-lysyl-[protein] + 4 Fe(3+) + 2 hydrogen sulfide + 2 5'-deoxyadenosine + 2 L-methionine + 2 reduced [2Fe-2S]-[ferredoxin]. It functions in the pathway protein modification; protein lipoylation via endogenous pathway; protein N(6)-(lipoyl)lysine from octanoyl-[acyl-carrier-protein]: step 2/2. Its function is as follows. Catalyzes the radical-mediated insertion of two sulfur atoms into the C-6 and C-8 positions of the octanoyl moiety bound to the lipoyl domains of lipoate-dependent enzymes, thereby converting the octanoylated domains into lipoylated derivatives. This Salmonella typhi protein is Lipoyl synthase.